Here is a 238-residue protein sequence, read N- to C-terminus: MRPNNRENNQPRQIKITRNYTKHAEGSVLVEFGDTKVLCTATVEDAVPRFLKGQGQGWVTAEYGMLPRSTHSRMQREAAKGKQSGRTMEIQRLIARSLRAMVDLKALGERAITLDCDVIQADGGTRTASITGAAVALCDAINSLIENGTLKTNPIKGLVSAISVGIVEGQAVCDLEYVEDSAAETDMNVVMMEDGRMIEVQGTAEGEPFSHEELLTLLDLAKQGCNQIFIAQRKVLGL.

Residues Arg86 and 124 to 126 (GTR) contribute to the phosphate site.

Belongs to the RNase PH family. Homohexameric ring arranged as a trimer of dimers.

It carries out the reaction tRNA(n+1) + phosphate = tRNA(n) + a ribonucleoside 5'-diphosphate. In terms of biological role, phosphorolytic 3'-5' exoribonuclease that plays an important role in tRNA 3'-end maturation. Removes nucleotide residues following the 3'-CCA terminus of tRNAs; can also add nucleotides to the ends of RNA molecules by using nucleoside diphosphates as substrates, but this may not be physiologically important. Probably plays a role in initiation of 16S rRNA degradation (leading to ribosome degradation) during starvation. In Haemophilus influenzae (strain PittGG), this protein is Ribonuclease PH.